The following is a 475-amino-acid chain: Putative aldehyde dehydrogenase (475 aa).

Residues 146-147 and 223-224 each bind NAD(+); these read WN and GS. The active-site Proton acceptor is E245. L246 lines the NAD(+) pocket. Residue C279 is the Nucleophile of the active site. E379 is an NAD(+) binding site.

This sequence belongs to the aldehyde dehydrogenase family.

It carries out the reaction an aldehyde + NAD(+) + H2O = a carboxylate + NADH + 2 H(+). This Staphylococcus aureus (strain MSSA476) protein is Putative aldehyde dehydrogenase.